Consider the following 125-residue polypeptide: Phosphoribosyl-AMP cyclohydrolase (125 aa).

D74 serves as a coordination point for Mg(2+). C75 is a binding site for Zn(2+). Mg(2+)-binding residues include D76 and D78. Residues C92 and C99 each contribute to the Zn(2+) site.

This sequence belongs to the PRA-CH family. Homodimer. It depends on Mg(2+) as a cofactor. Zn(2+) is required as a cofactor.

It is found in the cytoplasm. It catalyses the reaction 1-(5-phospho-beta-D-ribosyl)-5'-AMP + H2O = 1-(5-phospho-beta-D-ribosyl)-5-[(5-phospho-beta-D-ribosylamino)methylideneamino]imidazole-4-carboxamide. It participates in amino-acid biosynthesis; L-histidine biosynthesis; L-histidine from 5-phospho-alpha-D-ribose 1-diphosphate: step 3/9. Its function is as follows. Catalyzes the hydrolysis of the adenine ring of phosphoribosyl-AMP. The protein is Phosphoribosyl-AMP cyclohydrolase of Desulfatibacillum aliphaticivorans.